The primary structure comprises 300 residues: MEFPFDVDALFPERITVLDQHLRPPARRPGTTTPARVDLQQQIMTIIDELGKASAKAQHLPAPITSASRMQSNRHVMYILKDTSARPAGKGAIVGFLKVGYKKLFVLDDREAHNEVEPLCILDFYIHESLQRHGHGRELFQHMLQKERVEPHQLAIDRPSQKLLKFLNKHYNLETTVPQVNNFVIFEGFFAHQHPPARKLPPKRAEGDIKPYSSSDREFLKVAVEPPWPLNRAPRRATPPAHPPPRSSSLGNSPERGPLRPFVPEQELLRSLRLCPPHPTARLLLATDPGGSPAQRRRTR.

Positions 1-190 (MEFPFDVDAL…NNFVIFEGFF (190 aa)) constitute an N-acetyltransferase domain. Lysine 56 bears the N6-acetyllysine; by autocatalysis mark. 124-137 (FYIHESLQRHGHGR) contacts acetyl-CoA. Lysine 146 carries the N6-acetyllysine; by autocatalysis modification. An acetyl-CoA-binding site is contributed by 160–169 (SQKLLKFLNK). An N6-acetyllysine; by autocatalysis mark is found at lysine 210 and lysine 221. Disordered regions lie at residues 229-263 (PLNR…RPFV) and 280-300 (TARL…RRTR). Phosphoserine is present on residues serine 249 and serine 253. At arginine 282 the chain carries Asymmetric dimethylarginine. Residue serine 292 is modified to Phosphoserine. Arginine 300 carries the post-translational modification Omega-N-methylarginine.

It belongs to the acetyltransferase ATAT1 family. As to quaternary structure, component of the BBSome complex. Interacts with AP2 alpha-adaptins, including AP2A2, but not with AP1 gamma-adaptin (AP1G1/AP1G2); this interaction is required for efficient alpha-tubulin acetylation, hence clathrin-coated pits are sites of microtubule acetylation. Post-translationally, autoacetylation strongly increases tubulin acetylation.

It localises to the cytoplasm. It is found in the membrane. The protein localises to the clathrin-coated pit. The protein resides in the cell junction. Its subcellular location is the focal adhesion. It localises to the cell projection. It is found in the axon. The protein localises to the cytoskeleton. The protein resides in the spindle. The catalysed reaction is L-lysyl-[alpha-tubulin] + acetyl-CoA = N(6)-acetyl-L-lysyl-[alpha-tubulin] + CoA + H(+). Specifically acetylates 'Lys-40' in alpha-tubulin on the lumenal side of microtubules. Promotes microtubule destabilization and accelerates microtubule dynamics; this activity may be independent of acetylation activity. Acetylates alpha-tubulin with a slow enzymatic rate, due to a catalytic site that is not optimized for acetyl transfer. Enters the microtubule through each end and diffuses quickly throughout the lumen of microtubules. Acetylates only long/old microtubules because of its slow acetylation rate since it does not have time to act on dynamically unstable microtubules before the enzyme is released. Required for normal sperm flagellar function. Promotes directional cell locomotion and chemotaxis, through AP2A2-dependent acetylation of alpha-tubulin at clathrin-coated pits that are concentrated at the leading edge of migrating cells. May facilitate primary cilium assembly. In Sus scrofa (Pig), this protein is Alpha-tubulin N-acetyltransferase 1.